The sequence spans 243 residues: 3-deoxy-manno-octulosonate cytidylyltransferase (243 aa).

It belongs to the KdsB family.

Its subcellular location is the cytoplasm. The catalysed reaction is 3-deoxy-alpha-D-manno-oct-2-ulosonate + CTP = CMP-3-deoxy-beta-D-manno-octulosonate + diphosphate. Its pathway is nucleotide-sugar biosynthesis; CMP-3-deoxy-D-manno-octulosonate biosynthesis; CMP-3-deoxy-D-manno-octulosonate from 3-deoxy-D-manno-octulosonate and CTP: step 1/1. It functions in the pathway bacterial outer membrane biogenesis; lipopolysaccharide biosynthesis. Activates KDO (a required 8-carbon sugar) for incorporation into bacterial lipopolysaccharide in Gram-negative bacteria. The protein is 3-deoxy-manno-octulosonate cytidylyltransferase of Helicobacter acinonychis (strain Sheeba).